We begin with the raw amino-acid sequence, 1227 residues long: DNA-directed RNA polymerase subunit beta (1227 aa).

Belongs to the RNA polymerase beta chain family. In terms of assembly, the RNAP catalytic core consists of 2 alpha, 1 beta, 1 beta' and 1 omega subunit. When a sigma factor is associated with the core the holoenzyme is formed, which can initiate transcription.

The catalysed reaction is RNA(n) + a ribonucleoside 5'-triphosphate = RNA(n+1) + diphosphate. Functionally, DNA-dependent RNA polymerase catalyzes the transcription of DNA into RNA using the four ribonucleoside triphosphates as substrates. The sequence is that of DNA-directed RNA polymerase subunit beta from Chloroflexus aggregans (strain MD-66 / DSM 9485).